Consider the following 23-residue polypeptide: Potassium channel toxin alpha-KTx 13.1 (23 aa).

3 cysteine pairs are disulfide-bonded: C2–C15, C5–C20, and C9–C22. Residues 13–20 are interaction with Ca(2+)-activated K(+) channels; sequence GKCINGRC.

Expressed by the venom gland.

It localises to the secreted. Functionally, blocks reversibly Shaker B potassium channels. Also displaces binding of noxiustoxin to mouse brain synaptosome membranes. The polypeptide is Potassium channel toxin alpha-KTx 13.1 (Tityus obscurus (Amazonian scorpion)).